The primary structure comprises 446 residues: Adenylosuccinate synthetase (446 aa).

GTP contacts are provided by residues 12-18 (GDEGKGK) and 40-42 (GHT). Catalysis depends on Asp-13, which acts as the Proton acceptor. Mg(2+) is bound by residues Asp-13 and Gly-40. IMP-binding positions include 13–16 (DEGK), 38–41 (NAGH), Thr-128, Arg-142, Gln-223, Thr-238, and Arg-302. His-41 serves as the catalytic Proton donor. Substrate is bound at residue 298-304 (TTTGRRR). Residues Arg-304, 330–332 (KLD), and 412–414 (SLG) contribute to the GTP site.

Belongs to the adenylosuccinate synthetase family. In terms of assembly, homodimer. Mg(2+) is required as a cofactor.

The protein localises to the cytoplasm. The enzyme catalyses IMP + L-aspartate + GTP = N(6)-(1,2-dicarboxyethyl)-AMP + GDP + phosphate + 2 H(+). The protein operates within purine metabolism; AMP biosynthesis via de novo pathway; AMP from IMP: step 1/2. In terms of biological role, plays an important role in the de novo pathway of purine nucleotide biosynthesis. Catalyzes the first committed step in the biosynthesis of AMP from IMP. The chain is Adenylosuccinate synthetase from Acaryochloris marina (strain MBIC 11017).